Consider the following 508-residue polypeptide: Histidine ammonia-lyase (508 aa).

A cross-link (5-imidazolinone (Ala-Gly)) is located at residues 143–145 (ASG). Position 144 is a 2,3-didehydroalanine (Ser) (Ser-144).

This sequence belongs to the PAL/histidase family. Post-translationally, contains an active site 4-methylidene-imidazol-5-one (MIO), which is formed autocatalytically by cyclization and dehydration of residues Ala-Ser-Gly.

The protein localises to the cytoplasm. The catalysed reaction is L-histidine = trans-urocanate + NH4(+). It functions in the pathway amino-acid degradation; L-histidine degradation into L-glutamate; N-formimidoyl-L-glutamate from L-histidine: step 1/3. This is Histidine ammonia-lyase from Klebsiella pneumoniae subsp. pneumoniae (strain ATCC 700721 / MGH 78578).